We begin with the raw amino-acid sequence, 547 residues long: Chaperonin GroEL (547 aa).

ATP is bound by residues 30-33, Lys51, 87-91, Gly415, 478-480, and Asp494; these read TLGP, DGTTT, and NAA.

This sequence belongs to the chaperonin (HSP60) family. As to quaternary structure, forms a cylinder of 14 subunits composed of two heptameric rings stacked back-to-back. Interacts with the co-chaperonin GroES.

It localises to the cytoplasm. It carries out the reaction ATP + H2O + a folded polypeptide = ADP + phosphate + an unfolded polypeptide.. In terms of biological role, together with its co-chaperonin GroES, plays an essential role in assisting protein folding. The GroEL-GroES system forms a nano-cage that allows encapsulation of the non-native substrate proteins and provides a physical environment optimized to promote and accelerate protein folding. This Geobacter sp. (strain M21) protein is Chaperonin GroEL.